The chain runs to 500 residues: Na(+)/H(+) antiporter NhaB (500 aa).

The next 11 membrane-spanning stretches (helical) occupy residues F13–P33, I34–F54, C62–S82, I97–I117, I129–L149, F242–I262, G306–V326, F350–I370, P392–A412, V449–L469, and M477–T497.

This sequence belongs to the NhaB Na(+)/H(+) (TC 2.A.34) antiporter family.

It localises to the cell inner membrane. The catalysed reaction is 2 Na(+)(in) + 3 H(+)(out) = 2 Na(+)(out) + 3 H(+)(in). Na(+)/H(+) antiporter that extrudes sodium in exchange for external protons. In Marinomonas sp. (strain MWYL1), this protein is Na(+)/H(+) antiporter NhaB.